The following is a 118-amino-acid chain: Pterin-4-alpha-carbinolamine dehydratase (118 aa).

This sequence belongs to the pterin-4-alpha-carbinolamine dehydratase family.

The catalysed reaction is (4aS,6R)-4a-hydroxy-L-erythro-5,6,7,8-tetrahydrobiopterin = (6R)-L-erythro-6,7-dihydrobiopterin + H2O. In terms of biological role, involved in tetrahydrobiopterin biosynthesis. Seems to both prevent the formation of 7-pterins and accelerate the formation of quinonoid-BH2. May also have a positive regulatory role in the expression of phhA. The sequence is that of Pterin-4-alpha-carbinolamine dehydratase (phhB) from Pseudomonas syringae pv. tomato (strain ATCC BAA-871 / DC3000).